The chain runs to 507 residues: F-box only protein 31 (507 aa).

The segment at 19–42 (RQQRRGPAETAAADSEADTDPEEE) is disordered. At serine 33 the chain carries Phosphoserine. The segment covering 33–42 (SEADTDPEEE) has biased composition (acidic residues). The residue at position 37 (threonine 37) is a Phosphothreonine. Residues 50 to 55 (RCSLLE) carry the D box motif. In terms of domain architecture, F-box spans 50-96 (RCSLLELPPELLVEIFASLPGTDLPSLAQVCSRFRRILHTDTIWRRR). 4 residues coordinate Zn(2+): cysteine 192, histidine 200, cysteine 216, and histidine 222. Position 264 is a phosphoserine; by ATM (serine 264). Positions 283–285 (DDL) match the DDL motif motif. The interval 366 to 417 (EQEAGEGAAPPREPSAKAADGPPAKDGKEPGGGAEAAEQSASSGQGQPFVLP) is disordered. Low complexity predominate over residues 400-412 (EAAEQSASSGQGQ). Serine 448 carries the post-translational modification Phosphoserine.

The protein belongs to the FBXO31 family. Part of a SCF (SKP1-cullin-F-box) protein ligase complex SCF(FBXO31) composed of CUL1, SKP1, RBX1 and FBXO31. Interacts (when phosphorylated at Ser-33) with CDC20, promoting ubiquitination by the APC/C complex. In terms of processing, phosphorylation at Ser-264 by ATM following gamma-irradiation results in its stabilization. Phosphorylation at Ser-448 in absence of stress promotes its ubiquitination and degradation by the SCF(FBXO46) complex. Phosphorylation at Ser-33 by AKT1 promotes association with CDC20 and ubiquitination by the APC/C complex. Post-translationally, ubiquitinated by the SCF(FBXO46) complex in absence of stress, promoting its degradation. Ubiquitinated by the APC/C complex following phosphorylation at Ser-33, leading to its degradation by the proteasome.

It is found in the cytoplasm. It localises to the cytoskeleton. The protein resides in the microtubule organizing center. The protein localises to the centrosome. It functions in the pathway protein modification; protein ubiquitination. Its function is as follows. Substrate-recognition component of the SCF(FBXO31) protein ligase complex, which specifically mediates the ubiquitination of proteins amidated at their C-terminus in response to oxidative stress, leading to their degradation by the proteasome. FBXO31 specifically recognizes and binds C-terminal peptides bearing an amide: C-terminal amidation in response to oxidative stress takes place following protein fragmentation. The SCF(FBXO31) also plays a role in G1 arrest following DNA damage by mediating ubiquitination of phosphorylated cyclin-D1 (CCND1), promoting its degradation by the proteasome, resulting in G1 arrest. The SCF(FBXO31) complex is however not a major regulator of CCND1 stability during the G1/S transition. In response to genotoxic stress, the SCF(FBXO31) complex directs ubiquitination and degradation of phosphorylated MDM2, thereby promoting p53/TP53-mediated DNA damage response. SCF(FBXO31) complex is required for genomic integrity by catalyzing ubiquitination and degradation of cyclin-A (CCNA1 and/or CCNA2) during the G1 phase. In response to genotoxic stress, the SCF(FBXO31) complex directs ubiquitination and degradation of phosphorylated FBXO46 and MAP2K6. SCF(FBXO31) complex promotes ubiquitination and degradation of CDT1 during the G2 phase to prevent re-replication. The SCF(FBXO31) complex also mediates ubiquitination and degradation of DUSP6, OGT and PARD6A. The sequence is that of F-box only protein 31 from Mus musculus (Mouse).